Here is a 529-residue protein sequence, read N- to C-terminus: Glucose-6-phosphate isomerase (529 aa).

Glu-322 functions as the Proton donor in the catalytic mechanism. Active-site residues include His-351 and Lys-455.

Belongs to the GPI family.

The protein resides in the cytoplasm. The catalysed reaction is alpha-D-glucose 6-phosphate = beta-D-fructose 6-phosphate. It functions in the pathway carbohydrate biosynthesis; gluconeogenesis. It participates in carbohydrate degradation; glycolysis; D-glyceraldehyde 3-phosphate and glycerone phosphate from D-glucose: step 2/4. Its function is as follows. Catalyzes the reversible isomerization of glucose-6-phosphate to fructose-6-phosphate. The sequence is that of Glucose-6-phosphate isomerase from Thermosynechococcus vestitus (strain NIES-2133 / IAM M-273 / BP-1).